Reading from the N-terminus, the 255-residue chain is Vitamin B12 import ATP-binding protein BtuD (255 aa).

In terms of domain architecture, ABC transporter spans 2–240; sequence MRVKHIAVGS…AGLAEVFKTQ (239 aa). 30–37 contacts ATP; that stretch reads GPNGSGKS.

It belongs to the ABC transporter superfamily. Vitamin B12 importer (TC 3.A.1.13.1) family. In terms of assembly, the complex is composed of two ATP-binding proteins (BtuD), two transmembrane proteins (BtuC) and a solute-binding protein (BtuF).

The protein localises to the cell inner membrane. The enzyme catalyses an R-cob(III)alamin(out) + ATP + H2O = an R-cob(III)alamin(in) + ADP + phosphate + H(+). Part of the ABC transporter complex BtuCDF involved in vitamin B12 import. Responsible for energy coupling to the transport system. The chain is Vitamin B12 import ATP-binding protein BtuD from Vibrio parahaemolyticus serotype O3:K6 (strain RIMD 2210633).